The following is a 1081-amino-acid chain: Probable cellulose synthase A catalytic subunit 8 [UDP-forming] (1081 aa).

The Cytoplasmic segment spans residues 1 to 277 (MDGDADAVKS…PSSRINPYRM (277 aa)). Residues cysteine 19, cysteine 22, cysteine 38, cysteine 41, cysteine 46, cysteine 49, cysteine 61, and cysteine 64 each contribute to the Zn(2+) site. The RING-type; degenerate zinc-finger motif lies at 19–65 (CQICGDGVGTTAEGDVFAACDVCGFPVCRPCYEYERKDGTQACPQCK). Positions 72–148 (KGSPAIRGEE…YDSGEIPRGY (77 aa)) are disordered. Residues 81 to 91 (EGEDTDADDVS) show a composition bias toward acidic residues. Residues 103 to 112 (QKQKIADRMR) are compositionally biased toward basic and acidic residues. Residues 278 to 298 (VIVLRLVVLSIFLHYRITNPV) form a helical membrane-spanning segment. Residues 299 to 300 (RN) are Extracellular-facing. Residues 301–321 (AYPLWLLSVICEIWFALSWIL) form a helical membrane-spanning segment. Over 322-864 (DQFPKWFPIN…INTTIYPLTS (543 aa)) the chain is Cytoplasmic. 4 residues coordinate UDP-alpha-D-glucose: serine 360, lysine 366, glutamate 367, and aspartate 396. Aspartate 396 is a catalytic residue. A coiled-coil region spans residues 450–477 (VKDRRAMKREYEEFKVRINGLVAKAQKV). Lysine 537 contributes to the UDP-alpha-D-glucose binding site. 2 residues coordinate Mn(2+): lysine 538 and aspartate 562. Positions 660–684 (SLCGGRKKASKSKKKSSDKKKSNKH) are disordered. The span at 664 to 682 (GRKKASKSKKKSSDKKKSN) shows a compositional bias: basic residues. Aspartate 781 is a catalytic residue. The chain crosses the membrane as a helical span at residues 865-885 (IPLLIYCVLPAICLLTGKFII). The Extracellular portion of the chain corresponds to 886–890 (PEISN). The chain crosses the membrane as a helical span at residues 891–911 (FASIWFISLFISIFATGILEM). The Cytoplasmic portion of the chain corresponds to 912 to 926 (RWSGVGIDEWWRNEQ). A helical membrane pass occupies residues 927-947 (FWVIGGISAHLFAVFQGLLKV). Over 948 to 977 (LAGIDTNFTVTSKASDEDGDFAELYMFKWT) the chain is Extracellular. Asparagine 954 carries N-linked (GlcNAc...) asparagine glycosylation. Residues 978-998 (TLLIPPTTILIINLVGVVAGI) traverse the membrane as a helical segment. Residues 999–1009 (SYAINSGYQSW) lie on the Cytoplasmic side of the membrane. A helical membrane pass occupies residues 1010 to 1030 (GPLFGKLFFAFWVIVHLYPFL). Residues 1031–1039 (KGLMGRQNR) are Extracellular-facing. A helical transmembrane segment spans residues 1040–1060 (TPTIVVVWAILLASIFSLLWV). The Cytoplasmic segment spans residues 1061-1081 (RIDPFTTRVTGPDTQTCGINC).

It belongs to the glycosyltransferase 2 family. Plant cellulose synthase subfamily. Mn(2+) serves as cofactor. Requires Zn(2+) as cofactor.

It is found in the cell membrane. The enzyme catalyses [(1-&gt;4)-beta-D-glucosyl](n) + UDP-alpha-D-glucose = [(1-&gt;4)-beta-D-glucosyl](n+1) + UDP + H(+). Its pathway is glycan metabolism; plant cellulose biosynthesis. Functionally, probable catalytic subunit of cellulose synthase terminal complexes ('rosettes'), required for beta-1,4-glucan microfibril crystallization, a major mechanism of the cell wall formation. The sequence is that of Probable cellulose synthase A catalytic subunit 8 [UDP-forming] (CESA8) from Oryza sativa subsp. japonica (Rice).